Reading from the N-terminus, the 72-residue chain is Translation initiation factor IF-1 (72 aa).

The S1-like domain maps to 1–72 (MSKEDHIEME…SKARITFRHR (72 aa)).

This sequence belongs to the IF-1 family. Component of the 30S ribosomal translation pre-initiation complex which assembles on the 30S ribosome in the order IF-2 and IF-3, IF-1 and N-formylmethionyl-tRNA(fMet); mRNA recruitment can occur at any time during PIC assembly.

Its subcellular location is the cytoplasm. Its function is as follows. One of the essential components for the initiation of protein synthesis. Stabilizes the binding of IF-2 and IF-3 on the 30S subunit to which N-formylmethionyl-tRNA(fMet) subsequently binds. Helps modulate mRNA selection, yielding the 30S pre-initiation complex (PIC). Upon addition of the 50S ribosomal subunit IF-1, IF-2 and IF-3 are released leaving the mature 70S translation initiation complex. In Methylococcus capsulatus (strain ATCC 33009 / NCIMB 11132 / Bath), this protein is Translation initiation factor IF-1.